The primary structure comprises 359 residues: DNA polymerase IV (359 aa).

The 182-residue stretch at 7-188 folds into the UmuC domain; that stretch reads IIHIDMDAFY…IPIGKFFGVG (182 aa). Residues Asp-11 and Asp-106 each coordinate Mg(2+). Glu-107 is a catalytic residue.

This sequence belongs to the DNA polymerase type-Y family. Monomer. Requires Mg(2+) as cofactor.

The protein resides in the cytoplasm. It catalyses the reaction DNA(n) + a 2'-deoxyribonucleoside 5'-triphosphate = DNA(n+1) + diphosphate. Poorly processive, error-prone DNA polymerase involved in untargeted mutagenesis. Copies undamaged DNA at stalled replication forks, which arise in vivo from mismatched or misaligned primer ends. These misaligned primers can be extended by PolIV. Exhibits no 3'-5' exonuclease (proofreading) activity. May be involved in translesional synthesis, in conjunction with the beta clamp from PolIII. This is DNA polymerase IV from Clostridium perfringens (strain ATCC 13124 / DSM 756 / JCM 1290 / NCIMB 6125 / NCTC 8237 / Type A).